Reading from the N-terminus, the 329-residue chain is 4-hydroxythreonine-4-phosphate dehydrogenase (329 aa).

Substrate-binding residues include His136 and Thr137. Residues His166, His211, and His266 each contribute to the a divalent metal cation site. 3 residues coordinate substrate: Lys274, Asn283, and Arg292.

This sequence belongs to the PdxA family. In terms of assembly, homodimer. Zn(2+) serves as cofactor. It depends on Mg(2+) as a cofactor. Co(2+) is required as a cofactor.

It localises to the cytoplasm. The catalysed reaction is 4-(phosphooxy)-L-threonine + NAD(+) = 3-amino-2-oxopropyl phosphate + CO2 + NADH. The protein operates within cofactor biosynthesis; pyridoxine 5'-phosphate biosynthesis; pyridoxine 5'-phosphate from D-erythrose 4-phosphate: step 4/5. Its function is as follows. Catalyzes the NAD(P)-dependent oxidation of 4-(phosphooxy)-L-threonine (HTP) into 2-amino-3-oxo-4-(phosphooxy)butyric acid which spontaneously decarboxylates to form 3-amino-2-oxopropyl phosphate (AHAP). This is 4-hydroxythreonine-4-phosphate dehydrogenase from Neisseria meningitidis serogroup A / serotype 4A (strain DSM 15465 / Z2491).